Here is a 172-residue protein sequence, read N- to C-terminus: Translationally-controlled tumor protein homolog (172 aa).

Residues 1–172 enclose the TCTP domain; sequence MKIYKDIITG…FKHGLDEEKC (172 aa).

It belongs to the TCTP family.

It localises to the cytoplasm. Its function is as follows. Involved in calcium binding and microtubule stabilization. This is Translationally-controlled tumor protein homolog from Drosophila yakuba (Fruit fly).